A 410-amino-acid chain; its full sequence is MKRAIILVLDSFGIGAAGDADKFGDVGSDTMGHIAEQCDKGLADNGNRKGPLTLPNLSKLGLAMAGKESTGKFSAGLDANAEIIGAYGHAAELSSGKDTPSGHWEIAGVPVLFDWGYFTDKENSFPKELTDRILERANLPGYLGNCHASGTQVLDDLGEEHMKTGMPIFYTSADSVFQIACHEETFGLDNLLTLCQIAREELEDYNIGRVIARPFIGPGKGQFERTGNRRDLSVEPPAATILQKLVDEKGGQVHSIGKISDIYAGCGITKKTKATGIPALFDATKEAIEQAIEQAGDNTIVFTNFVDFDSAYGHRRDVAGYAAALEYFDGRLPEIMDMLQEDDILILTADHGCDPTWPGTDHTREHIPVLVYGHKVPAGSLGRRDTFADIGQTLAEYFETSDMEYGKSFL.

Mn(2+) is bound by residues Asp-10, Asp-309, His-314, Asp-350, His-351, and His-362.

It belongs to the phosphopentomutase family. Mn(2+) serves as cofactor.

Its subcellular location is the cytoplasm. It catalyses the reaction 2-deoxy-alpha-D-ribose 1-phosphate = 2-deoxy-D-ribose 5-phosphate. It carries out the reaction alpha-D-ribose 1-phosphate = D-ribose 5-phosphate. The protein operates within carbohydrate degradation; 2-deoxy-D-ribose 1-phosphate degradation; D-glyceraldehyde 3-phosphate and acetaldehyde from 2-deoxy-alpha-D-ribose 1-phosphate: step 1/2. Its function is as follows. Isomerase that catalyzes the conversion of deoxy-ribose 1-phosphate (dRib-1-P) and ribose 1-phosphate (Rib-1-P) to deoxy-ribose 5-phosphate (dRib-5-P) and ribose 5-phosphate (Rib-5-P), respectively. This is Phosphopentomutase from Aliivibrio fischeri (strain ATCC 700601 / ES114) (Vibrio fischeri).